We begin with the raw amino-acid sequence, 303 residues long: Phytochrome-associated serine/threonine-protein phosphatase (303 aa).

Residues Asp50, His52, Asp78, and Asn110 each coordinate Zn(2+). Residue His111 is the Proton donor of the active site. Residues His160 and His234 each coordinate Zn(2+).

It belongs to the PPP phosphatase family. PP-6 (PP-V) subfamily. As to quaternary structure, interacts with PHYA and PHYB, mostly when they are phosphorylated and in Pfr forms. It depends on Zn(2+) as a cofactor. As to expression, mostly expressed in flowers and stems.

Its subcellular location is the cytoplasm. It catalyses the reaction O-phospho-L-seryl-[protein] + H2O = L-seryl-[protein] + phosphate. It carries out the reaction O-phospho-L-threonyl-[protein] + H2O = L-threonyl-[protein] + phosphate. Its function is as follows. Catalytic subunit of protein phosphatase 6 (PP6). Dephosphorylates phosphorylated phytochromes, with a preference toward Pfr forms. Plays a major role in the photoperiodic control of flowering time in long days by modulating phytochrome signals in flowering time control. The chain is Phytochrome-associated serine/threonine-protein phosphatase from Pisum sativum (Garden pea).